The sequence spans 213 residues: 3,4-dihydroxy-2-butanone 4-phosphate synthase (213 aa).

D-ribulose 5-phosphate contacts are provided by residues 37-38 (RE), aspartate 42, 150-154 (RPGHT), and glutamate 174. Residue glutamate 38 participates in Mg(2+) binding. Histidine 153 is a binding site for Mg(2+).

The protein belongs to the DHBP synthase family. As to quaternary structure, homodimer. Requires Mg(2+) as cofactor. The cofactor is Mn(2+).

It catalyses the reaction D-ribulose 5-phosphate = (2S)-2-hydroxy-3-oxobutyl phosphate + formate + H(+). Its pathway is cofactor biosynthesis; riboflavin biosynthesis; 2-hydroxy-3-oxobutyl phosphate from D-ribulose 5-phosphate: step 1/1. Functionally, catalyzes the conversion of D-ribulose 5-phosphate to formate and 3,4-dihydroxy-2-butanone 4-phosphate. In Clostridium botulinum (strain Langeland / NCTC 10281 / Type F), this protein is 3,4-dihydroxy-2-butanone 4-phosphate synthase.